Here is a 1198-residue protein sequence, read N- to C-terminus: DNA polymerase (1198 aa).

3 disordered regions span residues 1-87 (MALV…PRGT), 179-199 (LEQP…PNPP), and 904-930 (QLAL…PPSG). Composition is skewed to low complexity over residues 30–40 (QQPTRAAPAPA) and 57–68 (APPTSGGSPASP).

It belongs to the DNA polymerase type-B family. In terms of assembly, heterodimer with the terminal protein; this heterodimer binds to bp 9 to 18 of the genome. Forms a complex with viral pTP, DBP and hosts NFIA and POU2F1/OCT1 for initiation of replication.

The protein localises to the host nucleus. The catalysed reaction is DNA(n) + a 2'-deoxyribonucleoside 5'-triphosphate = DNA(n+1) + diphosphate. Functionally, eukaryotic-type DNA polymerase involved in viral genomic replication. DNA synthesis is protein primed, and acts in a strand displacement replication. Assembles in complex with viral pTP, DBP, host NFIA and host POU2F1/OCT1 on viral origin of replication. The polymerase covalently transfers dCMP onto pTP, thereby initiating complementary strand synthesis. The polypeptide is DNA polymerase (Homo sapiens (Human)).